Consider the following 364-residue polypeptide: MEAVTGILNTTIAVVFTWVGYKTARIIWKYTPYSYPNARIKAMEAKLLTEQKFNELAESRTLQNFVVNLEDTDYKDYLADVSSYTVEEVEKALERALAGTYELMFKILPKRSKGFFELLLEGWDVRNIANVVKAKLANEPASDYVVELGTMLPKVKAMAEAKTLEEILVILEGTPYEEVYQKLLLGEIDVTRFETELYRMHYGKLLSYALSRKDDERIILEEFVRLSIDRVNILTALRAKKAGLSAEEIKPMLIPGGTVKLDPLLHVDSFDMALAELDSTKYGQVIRDVREEIEKDLSVLEKALNDHIIERISELERFYPLSIATPLSYVLRREREIRKLRAIAKLIENGVEPERIKELAGEVA.

It belongs to the V-ATPase V0D/AC39 subunit family. As to quaternary structure, has multiple subunits with at least A(3), B(3), C, D, E, F, H, I and proteolipid K(x).

The protein localises to the cell membrane. Component of the A-type ATP synthase that produces ATP from ADP in the presence of a proton gradient across the membrane. This is A-type ATP synthase subunit C from Desulfurococcus sp. (strain SY).